A 457-amino-acid polypeptide reads, in one-letter code: ATP synthase subunit beta (457 aa).

150–157 (GGAGVGKT) is an ATP binding site.

This sequence belongs to the ATPase alpha/beta chains family. As to quaternary structure, F-type ATPases have 2 components, CF(1) - the catalytic core - and CF(0) - the membrane proton channel. CF(1) has five subunits: alpha(3), beta(3), gamma(1), delta(1), epsilon(1). CF(0) has three main subunits: a(1), b(2) and c(9-12). The alpha and beta chains form an alternating ring which encloses part of the gamma chain. CF(1) is attached to CF(0) by a central stalk formed by the gamma and epsilon chains, while a peripheral stalk is formed by the delta and b chains.

The protein resides in the cell membrane. It catalyses the reaction ATP + H2O + 4 H(+)(in) = ADP + phosphate + 5 H(+)(out). Functionally, produces ATP from ADP in the presence of a proton gradient across the membrane. The catalytic sites are hosted primarily by the beta subunits. The polypeptide is ATP synthase subunit beta (Baumannia cicadellinicola subsp. Homalodisca coagulata).